A 388-amino-acid chain; its full sequence is Succinate--CoA ligase [ADP-forming] subunit beta (388 aa).

In terms of domain architecture, ATP-grasp spans 9–244 (KQLFAEYGLP…PSQDDPREAH (236 aa)). Residues Lys-46, 53 to 55 (GRG), Glu-99, Thr-102, and Glu-107 each bind ATP. Mg(2+)-binding residues include Asn-199 and Asp-213. Residues Asn-264 and 321 to 323 (GIV) contribute to the substrate site.

This sequence belongs to the succinate/malate CoA ligase beta subunit family. In terms of assembly, heterotetramer of two alpha and two beta subunits. Requires Mg(2+) as cofactor.

The enzyme catalyses succinate + ATP + CoA = succinyl-CoA + ADP + phosphate. It carries out the reaction GTP + succinate + CoA = succinyl-CoA + GDP + phosphate. It participates in carbohydrate metabolism; tricarboxylic acid cycle; succinate from succinyl-CoA (ligase route): step 1/1. Functionally, succinyl-CoA synthetase functions in the citric acid cycle (TCA), coupling the hydrolysis of succinyl-CoA to the synthesis of either ATP or GTP and thus represents the only step of substrate-level phosphorylation in the TCA. The beta subunit provides nucleotide specificity of the enzyme and binds the substrate succinate, while the binding sites for coenzyme A and phosphate are found in the alpha subunit. The polypeptide is Succinate--CoA ligase [ADP-forming] subunit beta (Pseudomonas syringae pv. tomato (strain ATCC BAA-871 / DC3000)).